The following is a 554-amino-acid chain: CTP synthase (554 aa).

Residues 1-265 (MTPLIFVTGG…DELVIDQFKL (265 aa)) are amidoligase domain. Serine 13 serves as a coordination point for CTP. Serine 13 lines the UTP pocket. Residues 14 to 19 (SLGKGI) and aspartate 71 contribute to the ATP site. Residues aspartate 71 and glutamate 139 each coordinate Mg(2+). Residues 146 to 148 (DIE), 186 to 191 (KTKPTQ), and lysine 222 each bind CTP. UTP contacts are provided by residues 186-191 (KTKPTQ) and lysine 222. The Glutamine amidotransferase type-1 domain maps to 292-545 (NIAVVGKYVD…VRAAREKKAG (254 aa)). L-glutamine is bound at residue glycine 353. Residue cysteine 380 is the Nucleophile; for glutamine hydrolysis of the active site. Residues 381–384 (YGMQ), glutamate 404, and arginine 471 each bind L-glutamine. Residues histidine 518 and glutamate 520 contribute to the active site.

This sequence belongs to the CTP synthase family. Homotetramer.

The enzyme catalyses UTP + L-glutamine + ATP + H2O = CTP + L-glutamate + ADP + phosphate + 2 H(+). The catalysed reaction is L-glutamine + H2O = L-glutamate + NH4(+). It catalyses the reaction UTP + NH4(+) + ATP = CTP + ADP + phosphate + 2 H(+). The protein operates within pyrimidine metabolism; CTP biosynthesis via de novo pathway; CTP from UDP: step 2/2. Allosterically activated by GTP, when glutamine is the substrate; GTP has no effect on the reaction when ammonia is the substrate. The allosteric effector GTP functions by stabilizing the protein conformation that binds the tetrahedral intermediate(s) formed during glutamine hydrolysis. Inhibited by the product CTP, via allosteric rather than competitive inhibition. Functionally, catalyzes the ATP-dependent amination of UTP to CTP with either L-glutamine or ammonia as the source of nitrogen. Regulates intracellular CTP levels through interactions with the four ribonucleotide triphosphates. The polypeptide is CTP synthase (Xanthomonas axonopodis pv. citri (strain 306)).